We begin with the raw amino-acid sequence, 431 residues long: MKQYIEIIDVVARQILDSRCFPTVEVEVYLEDGTVGRAAVPSGASTGIYEAVELRDGDKDKYLGKGVEKAVANVNDTIAEEIIGLNVLDQAYIDKTLIELDGTKNKGKLGANAILGVSLAVAQAAANYLGMPLYQYIGGVNAKVLPVPMMNIINGGSHADNSVDIQEFMIMPVGFDCFERAVRACAEVYHALKKTLNSKGYSTGVGDEGGFAPNLKSNAEAIEVILEAIEKAGYEPGKEFFIAIDAASSEYYKDGKYVLEHEGKTLTAAEMVDFFEDWVNKYPIISIEDGMAEEDWEGWKLMTERLGKKVQLVGDDLFVTNTERLKTGIEKGIANSILIKLNQIGTLTETLNAIEMANRAGYTAVVSHRSGETEDTTIADLVVAVNAGQIKTGAPARSERVAKYNQLIRINEELGEVAEYRGRNAFFNLSK.

Gln166 serves as a coordination point for (2R)-2-phosphoglycerate. The Proton donor role is filled by Glu208. Asp245, Glu288, and Asp315 together coordinate Mg(2+). (2R)-2-phosphoglycerate is bound by residues Lys340, Arg369, Ser370, and Lys391. Lys340 (proton acceptor) is an active-site residue.

This sequence belongs to the enolase family. The cofactor is Mg(2+).

It is found in the cytoplasm. It localises to the secreted. The protein resides in the cell surface. It catalyses the reaction (2R)-2-phosphoglycerate = phosphoenolpyruvate + H2O. Its pathway is carbohydrate degradation; glycolysis; pyruvate from D-glyceraldehyde 3-phosphate: step 4/5. In terms of biological role, catalyzes the reversible conversion of 2-phosphoglycerate (2-PG) into phosphoenolpyruvate (PEP). It is essential for the degradation of carbohydrates via glycolysis. The polypeptide is Enolase (Clostridium perfringens (strain ATCC 13124 / DSM 756 / JCM 1290 / NCIMB 6125 / NCTC 8237 / Type A)).